The following is a 234-amino-acid chain: Opacity protein opA65 (234 aa).

Residue Ala-1 is a signal peptide. A disordered region spans residues 154–179 (TVTPKPKNGTQGGPVKSTSPIPAYHE).

Belongs to the opacity porin family.

It is found in the cell outer membrane. Functionally, implicated in a number of adherence functions. OPA proteins are implicated in pathogenesis and are subject to phase variation. The sequence is that of Opacity protein opA65 from Neisseria gonorrhoeae.